A 315-amino-acid chain; its full sequence is Sulfate adenylyltransferase subunit 2 1 (315 aa).

The tract at residues 287–315 (DSSSSERQGRAIDHDQSGSMERKKREGYF) is disordered. The segment covering 293 to 315 (RQGRAIDHDQSGSMERKKREGYF) has biased composition (basic and acidic residues).

This sequence belongs to the PAPS reductase family. CysD subfamily. Heterodimer composed of CysD, the smaller subunit, and CysN.

It carries out the reaction sulfate + ATP + H(+) = adenosine 5'-phosphosulfate + diphosphate. It participates in sulfur metabolism; hydrogen sulfide biosynthesis; sulfite from sulfate: step 1/3. Its function is as follows. With CysN forms the ATP sulfurylase (ATPS) that catalyzes the adenylation of sulfate producing adenosine 5'-phosphosulfate (APS) and diphosphate, the first enzymatic step in sulfur assimilation pathway. APS synthesis involves the formation of a high-energy phosphoric-sulfuric acid anhydride bond driven by GTP hydrolysis by CysN coupled to ATP hydrolysis by CysD. In Alkalilimnicola ehrlichii (strain ATCC BAA-1101 / DSM 17681 / MLHE-1), this protein is Sulfate adenylyltransferase subunit 2 1.